Consider the following 293-residue polypeptide: Methylsterol monooxygenase 1 (293 aa).

The next 2 membrane-spanning stretches (helical) occupy residues 55–75 (LIVHEALYFFFCLPGFLFQFI) and 100–120 (VLLFNHFCIQFPLICGTYYFT). A Fatty acid hydroxylase domain is found at 145-274 (CAVIEDTWHY…FTWWDRIFGT (130 aa)). A Histidine box-1 motif is present at residues 157-161 (HRLLH). The Histidine box-2 signature appears at 170–174 (HKIHH). A helical transmembrane segment spans residues 199–219 (FFIGIMLLCDHVILLWAWVTV). Residues 249-255 (HHDFHHM) carry the Histidine box-3 motif.

Belongs to the sterol desaturase family. Requires Fe cation as cofactor. In terms of processing, ubiquitinated by MARCHF6, leading to proteasomal degradation.

The protein localises to the endoplasmic reticulum membrane. The catalysed reaction is 4,4-dimethyl-5alpha-cholest-7-en-3beta-ol + 6 Fe(II)-[cytochrome b5] + 3 O2 + 5 H(+) = 4alpha-carboxy-4beta-methyl-5alpha-cholest-7-ene-3beta-ol + 6 Fe(III)-[cytochrome b5] + 4 H2O. It carries out the reaction 4,4-dimethyl-5alpha-cholesta-8,24-dien-3beta-ol + 6 Fe(II)-[cytochrome b5] + 3 O2 + 5 H(+) = 4beta-methylzymosterol-4alpha-carboxylate + 6 Fe(III)-[cytochrome b5] + 4 H2O. It catalyses the reaction 4alpha-methylzymosterol + 6 Fe(II)-[cytochrome b5] + 3 O2 + 5 H(+) = 4alpha-carboxyzymosterol + 6 Fe(III)-[cytochrome b5] + 4 H2O. The enzyme catalyses 4alpha-methyl-5alpha-cholest-7-en-3beta-ol + 6 Fe(II)-[cytochrome b5] + 3 O2 + 5 H(+) = 4alpha-carboxy-5alpha-cholest-7-en-3beta-ol + 6 Fe(III)-[cytochrome b5] + 4 H2O. The catalysed reaction is 4,4-dimethyl-5alpha-cholest-8-en-3beta-ol + 6 Fe(II)-[cytochrome b5] + 3 O2 + 5 H(+) = 4alpha-carboxy-4beta-methyl-5alpha-cholest-8-en-3beta-ol + 6 Fe(III)-[cytochrome b5] + 4 H2O. It carries out the reaction 4alpha-methyl-5alpha-cholest-8-en-3beta-ol + 6 Fe(II)-[cytochrome b5] + 3 O2 + 5 H(+) = 4alpha-carboxy-5alpha-cholest-8-ene-3beta-ol + 6 Fe(III)-[cytochrome b5] + 4 H2O. It participates in steroid biosynthesis; zymosterol biosynthesis; zymosterol from lanosterol: step 3/6. Its pathway is steroid biosynthesis; cholesterol biosynthesis. Functionally, catalyzes the three-step monooxygenation required for the demethylation of 4,4-dimethyl and 4alpha-methylsterols, which can be subsequently metabolized to cholesterol. In Sus scrofa (Pig), this protein is Methylsterol monooxygenase 1 (MSMO1).